Consider the following 265-residue polypeptide: MTTTAKTDDIPIDTVILDIEGTVCPITFVKDTLFPYFIEKLPSILDKFQYPLSNTSASSDDQVLNILKQLPDNITKSSESIYKHFKNLVDQDIKDPILKSLQGLIWKQGYEKNELQAPIYQDSIEFIESFPTKSSTNNKIYIYSSGSIKAQILLFGHVKSTTTTITNEVIDLNPKLNGYFDITTAGFKNQSNSYKKILQEINKSSTPKSVLFLSDNINEVNAAIEAGMKSYIVIRPGNPPIDDDDDGNDDKINHKIIYSLDELDL.

Residues aspartate 18 and glutamate 20 each coordinate Mg(2+). Residues 144–145 and lysine 188 each bind substrate; that span reads SS. Aspartate 215 serves as a coordination point for Mg(2+).

Belongs to the HAD-like hydrolase superfamily. MasA/MtnC family. In terms of assembly, monomer. Mg(2+) is required as a cofactor.

The protein localises to the cytoplasm. Its subcellular location is the nucleus. The catalysed reaction is 5-methylsulfanyl-2,3-dioxopentyl phosphate + H2O = 1,2-dihydroxy-5-(methylsulfanyl)pent-1-en-3-one + phosphate. It functions in the pathway amino-acid biosynthesis; L-methionine biosynthesis via salvage pathway; L-methionine from S-methyl-5-thio-alpha-D-ribose 1-phosphate: step 3/6. Its pathway is amino-acid biosynthesis; L-methionine biosynthesis via salvage pathway; L-methionine from S-methyl-5-thio-alpha-D-ribose 1-phosphate: step 4/6. Bifunctional enzyme that catalyzes the enolization of 2,3-diketo-5-methylthiopentyl-1-phosphate (DK-MTP-1-P) into the intermediate 2-hydroxy-3-keto-5-methylthiopentenyl-1-phosphate (HK-MTPenyl-1-P), which is then dephosphorylated to form the acireductone 1,2-dihydroxy-3-keto-5-methylthiopentene (DHK-MTPene). The polypeptide is Enolase-phosphatase E1 (Candida albicans (strain SC5314 / ATCC MYA-2876) (Yeast)).